We begin with the raw amino-acid sequence, 318 residues long: NADH-ubiquinone oxidoreductase chain 1 (318 aa).

The next 8 helical transmembrane spans lie at 1–21 (MLPITNSLTYIIPILIAVAFL), 71–91 (LLILSPILALTTAMLIWTPIP), 101–121 (LGLLSILAISSMAVNSTLWAG), 145–165 (VTLGIILLSILILTGGFTMQL), 172–192 (HIWLLTTSWPLTMMWFISTLA), 224–244 (FFLAEYTNIISMNLLTCIMFI), 253–273 (ELFLINLVTKTLLLSLTFLWI), and 294–314 (LPLTMALCLLQASLLVSISGI).

It belongs to the complex I subunit 1 family.

Its subcellular location is the mitochondrion inner membrane. It catalyses the reaction a ubiquinone + NADH + 5 H(+)(in) = a ubiquinol + NAD(+) + 4 H(+)(out). Its function is as follows. Core subunit of the mitochondrial membrane respiratory chain NADH dehydrogenase (Complex I) that is believed to belong to the minimal assembly required for catalysis. Complex I functions in the transfer of electrons from NADH to the respiratory chain. The immediate electron acceptor for the enzyme is believed to be ubiquinone. The protein is NADH-ubiquinone oxidoreductase chain 1 (MT-ND1) of Varanus rudicollis (Rough-necked monitor lizard).